The sequence spans 415 residues: Mechanosensing system component YbdG (415 aa).

Topologically, residues 1 to 24 (MQDLISQVEDLAGIEIDHTTSMVM) are periplasmic. A helical transmembrane segment spans residues 25–45 (IFGIIFLTAVVVHIILHWVVL). Topologically, residues 46–67 (RTFEKRAIASSRLWLQIITQNK) are cytoplasmic. The chain crosses the membrane as a helical span at residues 68-88 (LFHRLAFTLQGIIVNIQAVFW). Over 89–104 (LQKGTEAADILTTCAQ) the chain is Periplasmic. Residues 105 to 125 (LWIMMYALLSVFSLLDVILNL) traverse the membrane as a helical segment. Topologically, residues 126–148 (AQKFPAASQLPLKGIFQGIKLIG) are cytoplasmic. The helical transmembrane segment at 149-169 (AILVGILMISLLIGQSPAILI) threads the bilayer. Residues 170 to 173 (SGLG) lie on the Periplasmic side of the membrane. A helical membrane pass occupies residues 174–194 (AMAAVLMLVFKDPILGLVAGI). The Cytoplasmic portion of the chain corresponds to 195–415 (QLSANDMLKL…IRSLAGAFKQ (221 aa)).

Belongs to the MscS (TC 1.A.23) family. In terms of assembly, homoheptamer.

The protein resides in the cell inner membrane. In terms of biological role, functions as a component of a mechanosensing system that transmits signals triggered by external osmotic changes to intracellular factors. This is Mechanosensing system component YbdG (ybdG) from Shigella flexneri.